The following is a 342-amino-acid chain: Olfactory receptor 51F2 (342 aa).

The Extracellular segment spans residues M1 to Y39. N-linked (GlcNAc...) asparagine glycosylation is present at N17. Residues W40–L60 traverse the membrane as a helical segment. Residues F61 to S68 are Cytoplasmic-facing. Residues L69–L89 traverse the membrane as a helical segment. Residues C90–A113 are Extracellular-facing. C111 and C203 are disulfide-bonded. A helical transmembrane segment spans residues Q114–F134. Topologically, residues D135–A153 are cytoplasmic. Residues R154–M174 form a helical membrane-spanning segment. Topologically, residues L175–S210 are extracellular. A helical transmembrane segment spans residues I211 to S231. The Cytoplasmic segment spans residues Y232–A251. Residues F252–L272 form a helical membrane-spanning segment. The Extracellular segment spans residues S273 to H287. The chain crosses the membrane as a helical span at residues I288–V308. Topologically, residues K309–E342 are cytoplasmic.

It belongs to the G-protein coupled receptor 1 family.

Its subcellular location is the cell membrane. Odorant receptor. The polypeptide is Olfactory receptor 51F2 (OR51F2) (Homo sapiens (Human)).